The following is a 291-amino-acid chain: MSIQRLGYLGFEVADVRSWRTFATTRLGMMEASASETEATFRIDSRAWRLSVSRGPADDYLFAGFEVDSEQGLQEVKESLQAHGVTVKVEGGELIAKRGVLGLISCTDPFGNRVEIYYGATELFERPFASPTGVSGFQTGDQGLGHYVLSVADVDAALAFYTKALGFQLADVIDWTIGDGLSVTLYFLYCNGRHHSFAFAKLPGSKRLHHFMLQANGMDDVGLAYDKFDAERAVVMSLGRHTNDHMISFYGATPSGFAVEYGWGAREVTRHWSVVRYDRISIWGHKFQAPA.

VOC domains follow at residues 5–119 (RLGY…IYYG) and 143–264 (GLGH…YGWG). Residues His-146, His-210, and Glu-260 each coordinate Fe cation.

Belongs to the extradiol ring-cleavage dioxygenase family. Homooctamer. Fe(2+) is required as a cofactor.

The catalysed reaction is 3-methylcatechol + O2 = 2-hydroxy-6-oxo-2,4-heptadienoate + H(+). Its pathway is xenobiotic degradation; toluene degradation. This Pseudomonas putida (strain ATCC 700007 / DSM 6899 / JCM 31910 / BCRC 17059 / LMG 24140 / F1) protein is 3-methylcatechol 2,3-dioxygenase (todE).